The chain runs to 333 residues: Acetyl-coenzyme A carboxylase carboxyl transferase subunit alpha (333 aa).

Residues 48-308 (ALEVKVETLR…KEMLIEELRI (261 aa)) enclose the CoA carboxyltransferase C-terminal domain.

The protein belongs to the AccA family. Acetyl-CoA carboxylase is a heterohexamer composed of biotin carboxyl carrier protein (AccB), biotin carboxylase (AccC) and two subunits each of ACCase subunit alpha (AccA) and ACCase subunit beta (AccD).

The protein resides in the cytoplasm. The catalysed reaction is N(6)-carboxybiotinyl-L-lysyl-[protein] + acetyl-CoA = N(6)-biotinyl-L-lysyl-[protein] + malonyl-CoA. Its pathway is lipid metabolism; malonyl-CoA biosynthesis; malonyl-CoA from acetyl-CoA: step 1/1. In terms of biological role, component of the acetyl coenzyme A carboxylase (ACC) complex. First, biotin carboxylase catalyzes the carboxylation of biotin on its carrier protein (BCCP) and then the CO(2) group is transferred by the carboxyltransferase to acetyl-CoA to form malonyl-CoA. The chain is Acetyl-coenzyme A carboxylase carboxyl transferase subunit alpha from Chlorobium phaeobacteroides (strain DSM 266 / SMG 266 / 2430).